Consider the following 93-residue polypeptide: MNAKVVVVLVLVLTALCLSDGKPVSLSYRCPCRFFESHVARANVKHLKILNTPNCALQIVARLKNNNRQVCIDPKLKWIQEYLEKALNKRFKM.

A signal peptide spans 1–21; it reads MNAKVVVVLVLVLTALCLSDG. The Receptor activation motif motif lies at 22 to 23; that stretch reads KP. The tract at residues 29–33 is receptor and heparin binding; that stretch reads RCPCR. 2 cysteine pairs are disulfide-bonded: Cys-30-Cys-55 and Cys-32-Cys-71. 3 receptor binding regions span residues 39-41, 48-50, and 60-70; these read VAR, KIL, and VARLKNNNRQV. Heparin contacts are provided by residues 41–51, Arg-62, Gln-69, and Lys-85; that span reads RANVKHLKILN.

This sequence belongs to the intercrine alpha (chemokine CxC) family. Monomer or homodimer; in equilibrium. Dimer formation is induced by non acidic pH and the presence of multivalent anions, and by binding to CXCR4 or heparin. Monomeric form is required for full chemotactic activity and resistance to ischemia/reperfusion injury, whereas the dimeric form acts as a partial agonist of CXCR4, stimulating Ca2+ mobilization but with no chemotactic activity and instead acts as a selective antagonist that blocks chemotaxis induced by the monomeric form. Interacts with the N-terminus of ACKR3. Interacts with integrin subunit ITGB3 (via the allosteric site (site 2)). Interacts with TNFAIP6 (via Link domain). In terms of assembly, (Microbial infection) Interacts with molluscum contagiosum virus protein MC148. Processed forms SDF-1-beta(3-72) and SDF-1-alpha(3-67) are produced after secretion by proteolytic cleavage of isoforms Beta and Alpha, respectively. The N-terminal processing is probably achieved by DPP4. Isoform Alpha is first cleaved at the C-terminus to yield a SDF-1-alpha(1-67) intermediate before being processed at the N-terminus. The C-terminal processing of isoform Alpha is reduced by binding to heparin and, probably, cell surface proteoglycans. Isoform Alpha and isoform Beta are ubiquitously expressed, with highest levels detected in liver, pancreas and spleen. Isoform Gamma is mainly expressed in heart, with weak expression detected in several other tissues. Isoform Delta, isoform Epsilon and isoform Theta have highest expression levels in pancreas, with lower levels detected in heart, kidney, liver and spleen.

Its subcellular location is the secreted. Functionally, chemoattractant active on T-lymphocytes and monocytes but not neutrophils. Activates the C-X-C chemokine receptor CXCR4 to induce a rapid and transient rise in the level of intracellular calcium ions and chemotaxis. SDF-1-beta(3-72) and SDF-1-alpha(3-67) show a reduced chemotactic activity. Binding to cell surface proteoglycans seems to inhibit formation of SDF-1-alpha(3-67) and thus to preserve activity on local sites. Also binds to atypical chemokine receptor ACKR3, which activates the beta-arrestin pathway and acts as a scavenger receptor for SDF-1. Binds to the allosteric site (site 2) of integrins and activates integrins ITGAV:ITGB3, ITGA4:ITGB1 and ITGA5:ITGB1 in a CXCR4-independent manner. Acts as a positive regulator of monocyte migration and a negative regulator of monocyte adhesion via the LYN kinase. Stimulates migration of monocytes and T-lymphocytes through its receptors, CXCR4 and ACKR3, and decreases monocyte adherence to surfaces coated with ICAM-1, a ligand for beta-2 integrins. SDF1A/CXCR4 signaling axis inhibits beta-2 integrin LFA-1 mediated adhesion of monocytes to ICAM-1 through LYN kinase. Inhibits CXCR4-mediated infection by T-cell line-adapted HIV-1. Plays a protective role after myocardial infarction. Induces down-regulation and internalization of ACKR3 expressed in various cells. Has several critical functions during embryonic development; required for B-cell lymphopoiesis, myelopoiesis in bone marrow and heart ventricular septum formation. Stimulates the proliferation of bone marrow-derived B-cell progenitors in the presence of IL7 as well as growth of stromal cell-dependent pre-B-cells. The sequence is that of Stromal cell-derived factor 1 (CXCL12) from Homo sapiens (Human).